Consider the following 68-residue polypeptide: MKIIVFLAVLMLVSAQVCLVSAAEMEHSSDNELSSRDLVKRFPLPSCVYTRTCGKRDIESSEGANGGE.

The first 15 residues, 1 to 15 (MKIIVFLAVLMLVSA), serve as a signal peptide directing secretion. Residues 16-41 (QVCLVSAAEMEHSSDNELSSRDLVKR) constitute a propeptide that is removed on maturation. Residues C47 and C53 are joined by a disulfide bond. C53 is subject to Cysteine amide. A propeptide spanning residues 57 to 68 (DIESSEGANGGE) is cleaved from the precursor.

As to expression, expressed by the skin glands.

The protein resides in the secreted. The protein is Riparin-1.6 of Crinia riparia (Streambank froglet).